We begin with the raw amino-acid sequence, 146 residues long: D-aminoacyl-tRNA deacylase (146 aa).

Positions 137-138 (GP) match the Gly-cisPro motif, important for rejection of L-amino acids motif.

The protein belongs to the DTD family. As to quaternary structure, homodimer.

The protein localises to the cytoplasm. It carries out the reaction glycyl-tRNA(Ala) + H2O = tRNA(Ala) + glycine + H(+). It catalyses the reaction a D-aminoacyl-tRNA + H2O = a tRNA + a D-alpha-amino acid + H(+). Functionally, an aminoacyl-tRNA editing enzyme that deacylates mischarged D-aminoacyl-tRNAs. Also deacylates mischarged glycyl-tRNA(Ala), protecting cells against glycine mischarging by AlaRS. Acts via tRNA-based rather than protein-based catalysis; rejects L-amino acids rather than detecting D-amino acids in the active site. By recycling D-aminoacyl-tRNA to D-amino acids and free tRNA molecules, this enzyme counteracts the toxicity associated with the formation of D-aminoacyl-tRNA entities in vivo and helps enforce protein L-homochirality. This Psychrobacter sp. (strain PRwf-1) protein is D-aminoacyl-tRNA deacylase.